The chain runs to 533 residues: Flavin-containing monooxygenase 5 (533 aa).

A Dimethylated arginine modification is found at Arg5. FAD-binding positions include 10–14 (GGGVS), Glu33, and 41–42 (LW). Ser54 bears the Phosphoserine mark. Phosphotyrosine is present on Tyr56. Ser58 is modified (phosphoserine). 62–63 (NT) is a binding site for FAD. An NADP(+)-binding site is contributed by 196-199 (SGGD). The residue at position 280 (Ser280) is a Phosphoserine. Thr284 is modified (phosphothreonine). Ser401 is modified (phosphoserine). The helical transmembrane segment at 513–533 (TMTIGKFMLALAFFAIIIAYF) threads the bilayer.

It belongs to the FMO family. The cofactor is FAD. In terms of tissue distribution, expressed in fetal and adult liver.

Its subcellular location is the microsome membrane. It localises to the endoplasmic reticulum membrane. It catalyses the reaction N,N-dimethylaniline + NADPH + O2 + H(+) = N,N-dimethylaniline N-oxide + NADP(+) + H2O. It carries out the reaction NADPH + O2 + H(+) = H2O2 + NADP(+). The catalysed reaction is heptan-2-one + NADPH + O2 + H(+) = pentyl acetate + NADP(+) + H2O. The enzyme catalyses octan-3-one + NADPH + O2 + H(+) = pentyl propanoate + NADP(+) + H2O. It catalyses the reaction octan-3-one + NADPH + O2 + H(+) = ethyl hexanoate + NADP(+) + H2O. It carries out the reaction hexan-3-one + NADPH + O2 + H(+) = ethyl butanoate + NADP(+) + H2O. The catalysed reaction is hexan-3-one + NADPH + O2 + H(+) = propyl propanoate + NADP(+) + H2O. The enzyme catalyses heptan-4-one + NADPH + O2 + H(+) = propyl butanoate + NADP(+) + H2O. It catalyses the reaction (2E)-geranial + NADPH + O2 + H(+) = (1E)-2,6-dimethylhepta-1,5-dien-1-yl formate + NADP(+) + H2O. It carries out the reaction sulcatone + NADPH + O2 + H(+) = 4-methylpent-3-en-1-yl acetate + NADP(+) + H2O. Acts as a Baeyer-Villiger monooxygenase on a broad range of substrates. Catalyzes the insertion of an oxygen atom into a carbon-carbon bond adjacent to a carbonyl, which converts ketones to esters. Active on diverse carbonyl compounds, whereas soft nucleophiles are mostly non- or poorly reactive. In contrast with other forms of FMO it is non- or poorly active on 'classical' substrates such as drugs, pesticides, and dietary components containing soft nucleophilic heteroatoms. Able to oxidize drug molecules bearing a carbonyl group on an aliphatic chain, such as nabumetone and pentoxifylline. Also, in the absence of substrates, shows slow but yet significant NADPH oxidase activity. Acts as a positive modulator of cholesterol biosynthesis as well as glucose homeostasis, promoting metabolic aging via pleiotropic effects. This Homo sapiens (Human) protein is Flavin-containing monooxygenase 5.